The following is a 357-amino-acid chain: Probable GTP 3',8-cyclase (357 aa).

Positions 5–234 (DFGRDVSGVR…DRRRYWVSSR (230 aa)) constitute a Radical SAM core domain. Arg14 serves as a coordination point for GTP. The [4Fe-4S] cluster site is built by Cys21 and Cys25. S-adenosyl-L-methionine is bound at residue Tyr27. [4Fe-4S] cluster is bound at residue Cys28. Lys68 is a binding site for GTP. Gly72 provides a ligand contact to S-adenosyl-L-methionine. Thr96 serves as a coordination point for GTP. Ser120 provides a ligand contact to S-adenosyl-L-methionine. Lys157 lines the GTP pocket. The disordered stretch occupies residues 232 to 256 (SSRDAGSTADDAAQSVTPDGGAHPD). The [4Fe-4S] cluster site is built by Cys272 and Cys275. 277–279 (RVR) contributes to the GTP binding site. Cys289 contacts [4Fe-4S] cluster.

This sequence belongs to the radical SAM superfamily. MoaA family. [4Fe-4S] cluster serves as cofactor.

It carries out the reaction GTP + AH2 + S-adenosyl-L-methionine = (8S)-3',8-cyclo-7,8-dihydroguanosine 5'-triphosphate + 5'-deoxyadenosine + L-methionine + A + H(+). The protein operates within cofactor biosynthesis; molybdopterin biosynthesis. Its function is as follows. Catalyzes the cyclization of GTP to (8S)-3',8-cyclo-7,8-dihydroguanosine 5'-triphosphate. The chain is Probable GTP 3',8-cyclase from Halobacterium salinarum (strain ATCC 29341 / DSM 671 / R1).